A 339-amino-acid chain; its full sequence is Ureidoglycine carbamoyltransferase (339 aa).

The protein belongs to the aspartate/ornithine carbamoyltransferase superfamily. Homodimer.

It carries out the reaction (S)-2-ureidoglycine + carbamoyl phosphate = allantoate + phosphate + H(+). Its pathway is purine metabolism. Catalyzes the phosphorolysis of allantoate to ureidoglycine and carbamoyl phosphate. Is likely involved in a purine degradation pathway. The sequence is that of Ureidoglycine carbamoyltransferase from Rubrobacter xylanophilus (strain DSM 9941 / JCM 11954 / NBRC 16129 / PRD-1).